Here is a 204-residue protein sequence, read N- to C-terminus: Glideosome-associated protein 45 (204 aa).

The tract at residues 1–86 (MGNKCSRSKV…KEEIDYATQE (86 aa)) is disordered. Residue Gly2 is the site of N-myristoyl glycine attachment. The interval 2–29 (GNKCSRSKVKEPKRKDIDELAERENLKK) is targets GAP45 to the cell membrane; however, dispensable for the formation of the glideosome complex and the association with the inner membrane complex. Residues 9 to 53 (KVKEPKRKDIDELAERENLKKQSEEIIEEKPEEVVEQVEETHEEP) show a composition bias toward basic and acidic residues. Acidic residues predominate over residues 54 to 73 (LEQEQELDEQKIEEEEEEPE). Position 89 is a phosphoserine; by CPK10 (Ser89). Ser103 carries the post-translational modification Phosphoserine; by CPK10 and PKB. Ser149 bears the Phosphoserine; by CPK10 mark.

Component of the glideosome complex composed of GAP50, GAP45, MTIP and MyoA; the complex is formed during the late schizont stage and in merozoites. MyoA, MTIP and GAP45 probably form an initial complex in the cytoplasm which is then recruited to the outer face of the inner membrane complex via the interaction with GAP50. Interacts with GAP50; the interaction is independent of GAP45 phosphorylation status and can also occur independently of the formation of the glideosome complex. Post-translationally, phosphorylated at multiple sites. Phosphorylation increases during the schizont stage and peaks in segmented merozoites. May be phosphorylated by PKB. In schizonts, phosphorylated at Ser-89 and Ser-149 in response to phospholipase C-mediated calcium release. Phosphorylation at Ser-149 begins in early schizonts while phosphorylation at Ser-103 begins in late schizonts. Phosphorylation at Ser-89, Ser-103 and Ser-149 appears to be dispensable for GAP45 inner membrane complex localization or GAP45 inclusion in the glideosome complex. Phosphorylation is not required for interaction with GAP50; however, it may regulate the interaction with MTIP and MyoA. N-myristoylated by NMT. N-myristoylation may contribute to the targeting of GAP45 to the inner membrane complex with the subsequent palmitoylation strengthening the interaction with the membrane. In terms of processing, palmitoylated. Palmitoylation appears to follow N-myristoylation and may strengthen the interaction with the inner membrane complex.

It localises to the inner membrane complex. Component of the glideosome complex, an inner membrane complex structure involved in parasite gliding motility and host cell invasion. During the asexual blood stage, required in schizonts to recruit MTIP and MyoA to the inner membrane complex where they assemble with GAP50 to form the glideosome complex. By regulating the formation of the glideosome, plays an essential role during merozoite invasion of host erythrocytes. This chain is Glideosome-associated protein 45, found in Plasmodium falciparum (isolate 3D7).